A 273-amino-acid polypeptide reads, in one-letter code: Oxidation resistance protein 1 (273 aa).

Met1 carries the N-acetylmethionine modification. Positions 18–33 are enriched in low complexity; sequence TDSSDSTAYTTASESS. Disordered regions lie at residues 18–48 and 177–197; these read TDSS…NKTT and ISEK…GDKE. The segment covering 37-48 has biased composition (basic and acidic residues); it reads KDSHNPFRNKTT. Residues 74–273 form the TLDc domain; that stretch reads KLLTPEMCDE…IVALEVWRVG (200 aa). At Ser178 the chain carries Phosphoserine.

This sequence belongs to the OXR1 family.

It localises to the mitochondrion. Its function is as follows. Involved in protection from oxidative damage. In Saccharomyces cerevisiae (strain ATCC 204508 / S288c) (Baker's yeast), this protein is Oxidation resistance protein 1 (OXR1).